Here is a 275-residue protein sequence, read N- to C-terminus: Formamidopyrimidine-DNA glycosylase (275 aa).

Catalysis depends on Pro-2, which acts as the Schiff-base intermediate with DNA. The Proton donor role is filled by Glu-3. Lys-58 serves as the catalytic Proton donor; for beta-elimination activity. His-91 and Arg-110 together coordinate DNA. The segment at 238–272 (QVYGQTGKPCPRCGQAIVKLKVGGRGTHICPKCQK) adopts an FPG-type zinc-finger fold. Arg-262 functions as the Proton donor; for delta-elimination activity in the catalytic mechanism.

This sequence belongs to the FPG family. As to quaternary structure, monomer. Zn(2+) is required as a cofactor.

The enzyme catalyses Hydrolysis of DNA containing ring-opened 7-methylguanine residues, releasing 2,6-diamino-4-hydroxy-5-(N-methyl)formamidopyrimidine.. It catalyses the reaction 2'-deoxyribonucleotide-(2'-deoxyribose 5'-phosphate)-2'-deoxyribonucleotide-DNA = a 3'-end 2'-deoxyribonucleotide-(2,3-dehydro-2,3-deoxyribose 5'-phosphate)-DNA + a 5'-end 5'-phospho-2'-deoxyribonucleoside-DNA + H(+). Involved in base excision repair of DNA damaged by oxidation or by mutagenic agents. Acts as a DNA glycosylase that recognizes and removes damaged bases. Has a preference for oxidized purines, such as 7,8-dihydro-8-oxoguanine (8-oxoG). Has AP (apurinic/apyrimidinic) lyase activity and introduces nicks in the DNA strand. Cleaves the DNA backbone by beta-delta elimination to generate a single-strand break at the site of the removed base with both 3'- and 5'-phosphates. This chain is Formamidopyrimidine-DNA glycosylase, found in Streptococcus pyogenes serotype M28 (strain MGAS6180).